Reading from the N-terminus, the 164-residue chain is RNA pyrophosphohydrolase (164 aa).

The 147-residue stretch at 12–158 (RYRQCAGVML…KREVYRAVVK (147 aa)) folds into the Nudix hydrolase domain. The short motif at 47 to 68 (GGIDPGETQQEAAMRELEEETG) is the Nudix box element.

This sequence belongs to the Nudix hydrolase family. RppH subfamily. A divalent metal cation is required as a cofactor.

In terms of biological role, accelerates the degradation of transcripts by removing pyrophosphate from the 5'-end of triphosphorylated RNA, leading to a more labile monophosphorylated state that can stimulate subsequent ribonuclease cleavage. In Erythrobacter litoralis (strain HTCC2594), this protein is RNA pyrophosphohydrolase.